Here is a 46-residue protein sequence, read N- to C-terminus: Apamin (46 aa).

Positions 1-27 (MISMLRCISLFLSVILITGYFVTPVMS) are cleaved as a signal peptide. 2 disulfide bridges follow: Cys-28–Cys-38 and Cys-30–Cys-42. The tract at residues 40–41 (RR) is essential for toxin activity. At His-45 the chain carries Histidine amide.

Expressed by the venom gland.

The protein resides in the secreted. Functionally, neurotoxin that blocks voltage-independent calcium-activated potassium channels (KCNN1=SK1, KCNN2=SK2, KCNN3=SK3). This Apis cerana cerana (Oriental honeybee) protein is Apamin.